The primary structure comprises 245 residues: Ribonuclease PH (245 aa).

Phosphate-binding positions include R86 and 124 to 126 (GTR).

This sequence belongs to the RNase PH family. Homohexameric ring arranged as a trimer of dimers.

The enzyme catalyses tRNA(n+1) + phosphate = tRNA(n) + a ribonucleoside 5'-diphosphate. Its function is as follows. Phosphorolytic 3'-5' exoribonuclease that plays an important role in tRNA 3'-end maturation. Removes nucleotide residues following the 3'-CCA terminus of tRNAs; can also add nucleotides to the ends of RNA molecules by using nucleoside diphosphates as substrates, but this may not be physiologically important. Probably plays a role in initiation of 16S rRNA degradation (leading to ribosome degradation) during starvation. The polypeptide is Ribonuclease PH (Bacillus velezensis (strain DSM 23117 / BGSC 10A6 / LMG 26770 / FZB42) (Bacillus amyloliquefaciens subsp. plantarum)).